Reading from the N-terminus, the 300-residue chain is MTTVGFDVPARLGTLLTAMVTPFDADGSVDTAAATRLANRLVDAGCDGLVLSGTTGESPTTTDDEKLQLLRVVLEAVGDRARVIAGAGSYDTAHSVRLVKACAGEGAHGLLVVTPYYSKPPQTGLFAHFTAVADATELPVLLYDIPGRSVVPIEPDTIRALASHPNIVGVKEAKADLYSGARIMADTGLAYYSGDDALNLPWLAVGAIGFISVISHLAAGQLRELLSAFGSGDITTARKINVAIGPLCSAMDRLGGVTMSKAGLRLQGIDVGDPRLPQMPATAEQIDELAVDMRAASVLR.

Thr-55 lines the pyruvate pocket. Tyr-143 functions as the Proton donor/acceptor in the catalytic mechanism. The active-site Schiff-base intermediate with substrate is the Lys-171. Ile-211 lines the pyruvate pocket.

This sequence belongs to the DapA family. Homotetramer; dimer of dimers.

The protein resides in the cytoplasm. The enzyme catalyses L-aspartate 4-semialdehyde + pyruvate = (2S,4S)-4-hydroxy-2,3,4,5-tetrahydrodipicolinate + H2O + H(+). The protein operates within amino-acid biosynthesis; L-lysine biosynthesis via DAP pathway; (S)-tetrahydrodipicolinate from L-aspartate: step 3/4. Catalyzes the condensation of (S)-aspartate-beta-semialdehyde [(S)-ASA] and pyruvate to 4-hydroxy-tetrahydrodipicolinate (HTPA). This Mycobacterium leprae (strain Br4923) protein is 4-hydroxy-tetrahydrodipicolinate synthase.